The chain runs to 336 residues: HTH-type transcriptional regulator SyrM (336 aa).

An HTH lysR-type domain is found at 41–98; that stretch reads IDLNLLVALEALLEYRNVTHAGQHIGRSQPAMSRALGRLRGLFNDDLLVRSSTGLIPT. The segment at residues 58 to 77 is a DNA-binding region (H-T-H motif); sequence VTHAGQHIGRSQPAMSRALG.

It belongs to the LysR transcriptional regulatory family.

Functionally, acts in trans to stimulate nod gene expression via nodD3 and exo gene expression via SyrA. The chain is HTH-type transcriptional regulator SyrM (syrM) from Rhizobium etli.